Reading from the N-terminus, the 202-residue chain is Ribosome maturation factor RimM (202 aa).

Residues 100–195 form the PRC barrel domain; sequence ADEWYPKDLI…YLTLDPPGGL (96 aa).

Belongs to the RimM family. In terms of assembly, binds ribosomal protein uS19.

It localises to the cytoplasm. Its function is as follows. An accessory protein needed during the final step in the assembly of 30S ribosomal subunit, possibly for assembly of the head region. Essential for efficient processing of 16S rRNA. May be needed both before and after RbfA during the maturation of 16S rRNA. It has affinity for free ribosomal 30S subunits but not for 70S ribosomes. The polypeptide is Ribosome maturation factor RimM (Bifidobacterium longum (strain NCC 2705)).